Reading from the N-terminus, the 431-residue chain is Large envelope protein (431 aa).

A lipid anchor (N-myristoyl glycine; by host) is attached at Gly-2. The tract at residues 2 to 148 (GNNIKVTFNP…PPLRDTHPHL (147 aa)) is pre-S1. Residues 2-207 (GNNIKVTFNP…PSTTGDPALS (206 aa)) form a pre-S region. Topologically, residues 2–214 (GNNIKVTFNP…ALSPEMSPSS (213 aa)) are virion surface; in external conformation. Residues 2-286 (GNNIKVTFNP…NGFRWMYLRR (285 aa)) lie on the Intravirion; in internal conformation side of the membrane. A glycan (N-linked (GlcNAc...) asparagine) is linked at Asn-3. The tract at residues 115-147 (IPRGLVPPQTPTNRDQGRKPTPPTPPLRDTHPH) is disordered. Positions 149–207 (TMKNQTFHLQGFVDGLRDLTTTERQHNAYRDPFTTLSPAVPTVSTILSPPSTTGDPALS) are pre-S2. Residues 215–235 (LLGLLAGLQVVYFLWTKILTI) traverse the membrane as a helical segment. Over 236–286 (AQNLDWWCTSLSFPGGIPECTGQNSQFQTCKHLPTSCPPTCNGFRWMYLRR) the chain is Intravirion; in external conformation. The helical transmembrane segment at 287–307 (FIIYLLVLLLCLIFLLVLLDW) threads the bilayer. Topologically, residues 308–379 (KGLIPVCPLQ…WALARLSWLN (72 aa)) are virion surface. Asn-351 carries an N-linked (GlcNAc...) asparagine; by host glycan. The helical transmembrane segment at 380–400 (LLVPLLQWLGGISLIAWFLLI) threads the bilayer. The Intravirion segment spans residues 401-406 (WMIWFW). The chain crosses the membrane as a helical span at residues 407–429 (GPALLSILPPFIPIFVLFFLIWV). The Virion surface segment spans residues 430–431 (YI).

Belongs to the orthohepadnavirus major surface antigen family. In terms of assembly, in its internal form (Li-HBsAg), interacts with the capsid protein and with the isoform S. Interacts with host chaperone CANX. Associates with host chaperone CANX through its pre-S2 N glycan; this association may be essential for isoform M proper secretion. As to quaternary structure, interacts with isoform L. Interacts with the antigens of satellite virus HDV (HDVAgs); this interaction is required for encapsidation of HDV genomic RNA. Isoform M is N-terminally acetylated by host at a ratio of 90%, and N-glycosylated by host at the pre-S2 region. Post-translationally, myristoylated.

The protein localises to the virion membrane. Functionally, the large envelope protein exists in two topological conformations, one which is termed 'external' or Le-HBsAg and the other 'internal' or Li-HBsAg. In its external conformation the protein attaches the virus to cell receptors and thereby initiating infection. This interaction determines the species specificity and liver tropism. This attachment induces virion internalization predominantly through caveolin-mediated endocytosis. The large envelope protein also assures fusion between virion membrane and endosomal membrane. In its internal conformation the protein plays a role in virion morphogenesis and mediates the contact with the nucleocapsid like a matrix protein. The middle envelope protein plays an important role in the budding of the virion. It is involved in the induction of budding in a nucleocapsid independent way. In this process the majority of envelope proteins bud to form subviral lipoprotein particles of 22 nm of diameter that do not contain a nucleocapsid. The sequence is that of Large envelope protein from Marmota monax (Woodchuck).